The following is a 126-amino-acid chain: Holo-[acyl-carrier-protein] synthase (126 aa).

Positions 9 and 58 each coordinate Mg(2+).

Belongs to the P-Pant transferase superfamily. AcpS family. Requires Mg(2+) as cofactor.

The protein resides in the cytoplasm. It catalyses the reaction apo-[ACP] + CoA = holo-[ACP] + adenosine 3',5'-bisphosphate + H(+). Functionally, transfers the 4'-phosphopantetheine moiety from coenzyme A to a Ser of acyl-carrier-protein. The protein is Holo-[acyl-carrier-protein] synthase of Aliivibrio fischeri (strain MJ11) (Vibrio fischeri).